We begin with the raw amino-acid sequence, 426 residues long: Ankyrin repeat-containing protein BDA1 (426 aa).

ANK repeat units follow at residues 1-29, 36-65, 70-99, 104-134, 138-167, and 182-212; these read MDSK…DILQ, IIHT…SFAK, YGLS…SLVR, GGMT…SIKD, NGET…KMRD, and GGNT…DRNI. Transmembrane regions (helical) follow at residues 288-308, 329-349, 355-375, and 380-400; these read ALLV…AQLL, WGCN…LLPV, WWYF…MYMM, and FFFL…VLYV.

Its subcellular location is the cell membrane. Involved in plant defense. Required for basal resistance against Pseudomonas syringae pv. tomato DC3000. Required for resistance against nonpathogenic bacteria. May be involved in signaling components that function downstream of SNC2 and upstream of NPR1 and WRKY70 to regulate defense responses. The chain is Ankyrin repeat-containing protein BDA1 from Arabidopsis thaliana (Mouse-ear cress).